The chain runs to 164 residues: UPF0178 protein BRADO3147 (164 aa).

Belongs to the UPF0178 family.

This Bradyrhizobium sp. (strain ORS 278) protein is UPF0178 protein BRADO3147.